Here is a 62-residue protein sequence, read N- to C-terminus: Photosystem II reaction center protein Z (62 aa).

A run of 2 helical transmembrane segments spans residues 8–28 (ALFA…VAFA) and 41–61 (FSGA…NSFI).

The protein belongs to the PsbZ family. PSII is composed of 1 copy each of membrane proteins PsbA, PsbB, PsbC, PsbD, PsbE, PsbF, PsbH, PsbI, PsbJ, PsbK, PsbL, PsbM, PsbT, PsbY, PsbZ, Psb30/Ycf12, at least 3 peripheral proteins of the oxygen-evolving complex and a large number of cofactors. It forms dimeric complexes.

The protein localises to the plastid. The protein resides in the chloroplast thylakoid membrane. In terms of biological role, may control the interaction of photosystem II (PSII) cores with the light-harvesting antenna, regulates electron flow through the 2 photosystem reaction centers. PSII is a light-driven water plastoquinone oxidoreductase, using light energy to abstract electrons from H(2)O, generating a proton gradient subsequently used for ATP formation. The protein is Photosystem II reaction center protein Z of Adiantum capillus-veneris (Maidenhair fern).